A 513-amino-acid polypeptide reads, in one-letter code: Probable DNA primase large subunit (513 aa).

[4Fe-4S] cluster contacts are provided by C315, C398, C415, and C457.

This sequence belongs to the eukaryotic-type primase large subunit family. Heterodimer of a small subunit and a large subunit. Requires [4Fe-4S] cluster as cofactor.

Functionally, DNA primase is the polymerase that synthesizes small RNA primers for the Okazaki fragments made during discontinuous DNA replication. The protein is Probable DNA primase large subunit of Neurospora crassa (strain ATCC 24698 / 74-OR23-1A / CBS 708.71 / DSM 1257 / FGSC 987).